Consider the following 197-residue polypeptide: Inner membrane protein RclC (197 aa).

Over 1–15 the chain is Periplasmic; the sequence is MEKYLHLLSRGDKIG. A helical membrane pass occupies residues 16–36; sequence LTLIRLSIAIVFMWIGLLKFV. Residues 37 to 85 lie on the Cytoplasmic side of the membrane; sequence PYEADSITPFVANSPLMSFFYEHPEDYKQYLTHEGEYKPEARAWQTANN. The helical transmembrane segment at 86-106 threads the bilayer; it reads TYGFSNGLGVVEVIIALLVLA. Residues 107–112 lie on the Periplasmic side of the membrane; that stretch reads NPVNRW. A helical membrane pass occupies residues 113–133; that stretch reads LGLLGGLMAFTTPLVTLSFLI. Over 134–197 the chain is Cytoplasmic; sequence TTPEAWVPAL…ESSSTLKTEY (64 aa).

Its subcellular location is the cell inner membrane. Functionally, probably involved in reactive chlorine species (RCS) stress resistance. This Escherichia coli (strain K12) protein is Inner membrane protein RclC (rclC).